A 364-amino-acid chain; its full sequence is Suberization-associated anionic peroxidase 1 (364 aa).

An N-terminal signal peptide occupies residues 1 to 25 (MGFRLSHLSLALSFVALALAGVAIY). N-linked (GlcNAc...) asparagine glycosylation occurs at asparagine 36. Cystine bridges form between cysteine 81/cysteine 160 and cysteine 112/cysteine 117. Histidine 110 serves as the catalytic Proton acceptor. The Ca(2+) site is built by aspartate 111, valine 114, glycine 116, and aspartate 118. N-linked (GlcNAc...) asparagine glycosylation is found at asparagine 127, asparagine 162, and asparagine 200. Disulfide bonds link cysteine 167/cysteine 353 and cysteine 246/cysteine 265. Proline 209 contacts substrate. 2 N-linked (GlcNAc...) asparagine glycosylation sites follow: asparagine 214 and asparagine 226. Position 239 (histidine 239) interacts with heme b. A Ca(2+)-binding site is contributed by threonine 240. N-linked (GlcNAc...) asparagine glycosylation occurs at asparagine 264. Ca(2+)-binding residues include aspartate 278, threonine 280, and aspartate 285.

The protein belongs to the peroxidase family. Classical plant (class III) peroxidase subfamily. The cofactor is Ca(2+). Heme b is required as a cofactor.

It is found in the secreted. The enzyme catalyses 2 a phenolic donor + H2O2 = 2 a phenolic radical donor + 2 H2O. Removal of H(2)O(2), oxidation of toxic reductants, biosynthesis and degradation of lignin, suberization, auxin catabolism, response to environmental stresses such as wounding, pathogen attack and oxidative stress. These functions might be dependent on each isozyme/isoform in each plant tissue. In terms of biological role, suggested to catalyze the deposition of the aromatic residues of suberin on the cell wall and thus play a role in cell-suberization. This is Suberization-associated anionic peroxidase 1 (TAP1) from Solanum lycopersicum (Tomato).